Reading from the N-terminus, the 148-residue chain is 3-dehydroquinate dehydratase (148 aa).

Tyrosine 24 acts as the Proton acceptor in catalysis. Asparagine 75, histidine 81, and aspartate 88 together coordinate substrate. Histidine 101 (proton donor) is an active-site residue. Substrate is bound by residues 102–103 and arginine 112; that span reads LS.

Belongs to the type-II 3-dehydroquinase family. Homododecamer.

It carries out the reaction 3-dehydroquinate = 3-dehydroshikimate + H2O. It functions in the pathway metabolic intermediate biosynthesis; chorismate biosynthesis; chorismate from D-erythrose 4-phosphate and phosphoenolpyruvate: step 3/7. Functionally, catalyzes a trans-dehydration via an enolate intermediate. This Rhizobium meliloti (strain 1021) (Ensifer meliloti) protein is 3-dehydroquinate dehydratase.